The chain runs to 523 residues: Galactarate dehydratase (L-threo-forming) (523 aa).

The protein belongs to the UxaA family. In terms of assembly, homodimer. The cofactor is Fe(2+).

The enzyme catalyses galactarate = 5-dehydro-4-deoxy-D-glucarate + H2O. It participates in carbohydrate acid metabolism; galactarate degradation; D-glycerate from galactarate: step 1/3. Functionally, catalyzes the dehydration of galactarate to form 5-dehydro-4-deoxy-D-glucarate (5-KDG). In Escherichia coli (strain K12), this protein is Galactarate dehydratase (L-threo-forming).